Reading from the N-terminus, the 300-residue chain is ATP synthase gamma chain (300 aa).

Belongs to the ATPase gamma chain family. In terms of assembly, F-type ATPases have 2 components, CF(1) - the catalytic core - and CF(0) - the membrane proton channel. CF(1) has five subunits: alpha(3), beta(3), gamma(1), delta(1), epsilon(1). CF(0) has three main subunits: a, b and c.

It localises to the cell membrane. Functionally, produces ATP from ADP in the presence of a proton gradient across the membrane. The gamma chain is believed to be important in regulating ATPase activity and the flow of protons through the CF(0) complex. The protein is ATP synthase gamma chain of Enterococcus hirae (strain ATCC 9790 / DSM 20160 / JCM 8729 / LMG 6399 / NBRC 3181 / NCIMB 6459 / NCDO 1258 / NCTC 12367 / WDCM 00089 / R).